Reading from the N-terminus, the 140-residue chain is GTP-dependent dephospho-CoA kinase (140 aa).

Positions 21, 22, 23, 40, 42, and 92 each coordinate GTP.

The protein belongs to the GTP-dependent DPCK family.

It catalyses the reaction 3'-dephospho-CoA + GTP = GDP + CoA + H(+). It participates in cofactor biosynthesis; coenzyme A biosynthesis. In terms of biological role, catalyzes the GTP-dependent phosphorylation of the 3'-hydroxyl group of dephosphocoenzyme A to form coenzyme A (CoA). This Pyrobaculum aerophilum (strain ATCC 51768 / DSM 7523 / JCM 9630 / CIP 104966 / NBRC 100827 / IM2) protein is GTP-dependent dephospho-CoA kinase.